We begin with the raw amino-acid sequence, 332 residues long: NADH-quinone oxidoreductase subunit H (332 aa).

9 consecutive transmembrane segments (helical) span residues 16–36 (VFFG…TYAI), 87–107 (YVLA…ALPF), 116–136 (IGVG…GVVT), 164–184 (LVMS…VDIV), 190–210 (VWFI…AVAE), 231–251 (VEYS…YLFA), 253–273 (AALI…LGWI), 277–297 (VWFA…RATF), and 312–332 (VLLP…SLFF).

This sequence belongs to the complex I subunit 1 family. As to quaternary structure, NDH-1 is composed of 14 different subunits. Subunits NuoA, H, J, K, L, M, N constitute the membrane sector of the complex.

Its subcellular location is the cell membrane. It catalyses the reaction a quinone + NADH + 5 H(+)(in) = a quinol + NAD(+) + 4 H(+)(out). Its function is as follows. NDH-1 shuttles electrons from NADH, via FMN and iron-sulfur (Fe-S) centers, to quinones in the respiratory chain. The immediate electron acceptor for the enzyme in this species is believed to be ubiquinone. Couples the redox reaction to proton translocation (for every two electrons transferred, four hydrogen ions are translocated across the cytoplasmic membrane), and thus conserves the redox energy in a proton gradient. This subunit may bind ubiquinone. This Geobacillus thermodenitrificans (strain NG80-2) protein is NADH-quinone oxidoreductase subunit H.